The chain runs to 466 residues: Transcription factor eupR (466 aa).

Polar residues predominate over residues 1 to 18; the sequence is MFSTEPRSDTAPGSPSCS. Residues 1 to 22 form a disordered region; the sequence is MFSTEPRSDTAPGSPSCSETKR. The segment at residues 32-62 is a DNA-binding region (zn(2)-C6 fungal-type); it reads CWECKRRKVKCSYSNPSDPRCIGCRRRGTKC.

Its subcellular location is the nucleus. Transcription factor; part of the gene cluster that mediates the biosynthesis of eupenifeldin, a bistropolone meroterpenoid that acts as an antitumor agent. This is Transcription factor eupR from Phoma sp.